The primary structure comprises 453 residues: Alpha-2B adrenergic receptor (453 aa).

At 1–17 the chain is on the extracellular side; the sequence is MSGPAMVHQEPYSVQAT. The helical transmembrane segment at 18-42 threads the bilayer; it reads AAIASAITFLILFTIFGNALVILAV. Topologically, residues 43-54 are cytoplasmic; the sequence is LTSRSLRAPQNL. Residues 55–80 form a helical membrane-spanning segment; sequence FLVSLAAADILVATLIIPFSLANELL. Topologically, residues 81–90 are extracellular; it reads GYWYFWRAWC. A disulfide bridge connects residues Cys-90 and Cys-169. The chain crosses the membrane as a helical span at residues 91–113; that stretch reads EVYLALDVLFCTSSIVHLCAISL. The Cytoplasmic segment spans residues 114–135; sequence DRYWAVSRALEYNSKRTPRRIK. A helical membrane pass occupies residues 136–158; the sequence is CIILTVWLIAAVISLPPLIYKGD. Topologically, residues 159 to 174 are extracellular; the sequence is QRPEPHGLPQCELNQE. A helical membrane pass occupies residues 175-198; it reads AWYILASSIGSFFAPCLIMILVYL. Topologically, residues 199–375 are cytoplasmic; sequence RIYVIAKRSH…LSREKRFTFV (177 aa). Positions 214 to 329 are disordered; sequence AKRGSGEGES…ASPASVFNPP (116 aa). The segment covering 303–314 has biased composition (acidic residues); sequence AEEDEEEVEECE. A helical membrane pass occupies residues 376–399; sequence LAVVIGVFVVCWFPFFFSYSLGAI. Residues 400–408 are Extracellular-facing; it reads CPQHCKVPH. Residues 409-432 traverse the membrane as a helical segment; it reads GLFQFFFWIGYCNSSLNPVIYTIF. The Cytoplasmic segment spans residues 433 to 453; it reads NQDFRRAFRRILCRQWTQTGW. Cys-445 carries S-palmitoyl cysteine lipidation.

Belongs to the G-protein coupled receptor 1 family. Adrenergic receptor subfamily. ADRA2B sub-subfamily. In terms of assembly, interacts with RAB26. Interacts with PPP1R9B. Interacts with GGA1, GGA2 and GGA3.

The protein localises to the cell membrane. Functionally, alpha-2 adrenergic receptors mediate the catecholamine-induced inhibition of adenylate cyclase through the action of G proteins. This chain is Alpha-2B adrenergic receptor (Adra2b), found in Mus musculus (Mouse).